Here is a 304-residue protein sequence, read N- to C-terminus: Nod factor export ATP-binding protein I (304 aa).

The ABC transporter domain occupies 6–236 (IDFQQVEKRY…EIGCDVIEIY (231 aa)). ATP is bound at residue 38 to 45 (GPNGAGKT).

Belongs to the ABC transporter superfamily. Lipooligosaccharide exporter (TC 3.A.1.102) family. As to quaternary structure, the complex is composed of two ATP-binding proteins (NodI) and two transmembrane proteins (NodJ).

The protein resides in the cell inner membrane. Functionally, part of the ABC transporter complex NodIJ involved in the export of the nodulation factors (Nod factors), the bacterial signal molecules that induce symbiosis and subsequent nodulation induction. Nod factors are LCO (lipo-chitin oligosaccharide), a modified beta-1,4-linked N-acetylglucosamine oligosaccharide. This subunit is responsible for energy coupling to the transport system. In Burkholderia pseudomallei (strain K96243), this protein is Nod factor export ATP-binding protein I.